We begin with the raw amino-acid sequence, 504 residues long: Aspartyl/glutamyl-tRNA(Asn/Gln) amidotransferase subunit B (504 aa).

This sequence belongs to the GatB/GatE family. GatB subfamily. Heterotrimer of A, B and C subunits.

It carries out the reaction L-glutamyl-tRNA(Gln) + L-glutamine + ATP + H2O = L-glutaminyl-tRNA(Gln) + L-glutamate + ADP + phosphate + H(+). The catalysed reaction is L-aspartyl-tRNA(Asn) + L-glutamine + ATP + H2O = L-asparaginyl-tRNA(Asn) + L-glutamate + ADP + phosphate + 2 H(+). Its function is as follows. Allows the formation of correctly charged Asn-tRNA(Asn) or Gln-tRNA(Gln) through the transamidation of misacylated Asp-tRNA(Asn) or Glu-tRNA(Gln) in organisms which lack either or both of asparaginyl-tRNA or glutaminyl-tRNA synthetases. The reaction takes place in the presence of glutamine and ATP through an activated phospho-Asp-tRNA(Asn) or phospho-Glu-tRNA(Gln). The chain is Aspartyl/glutamyl-tRNA(Asn/Gln) amidotransferase subunit B from Tropheryma whipplei (strain Twist) (Whipple's bacillus).